The primary structure comprises 835 residues: Protein translocase subunit SecA (835 aa).

ATP is bound by residues Gln-85, 103-107, and Asp-492; that span reads GEGKT. The segment at 788–807 is disordered; it reads VQGEAVHPSSDGEEAKKKPV. Positions 819, 821, 830, and 831 each coordinate Zn(2+).

It belongs to the SecA family. As to quaternary structure, monomer and homodimer. Part of the essential Sec protein translocation apparatus which comprises SecA, SecYEG and auxiliary proteins SecDF. Other proteins may also be involved. Requires Zn(2+) as cofactor.

It is found in the cell membrane. The protein resides in the cytoplasm. It carries out the reaction ATP + H2O + cellular proteinSide 1 = ADP + phosphate + cellular proteinSide 2.. Part of the Sec protein translocase complex. Interacts with the SecYEG preprotein conducting channel. Has a central role in coupling the hydrolysis of ATP to the transfer of proteins into and across the cell membrane, serving as an ATP-driven molecular motor driving the stepwise translocation of polypeptide chains across the membrane. This chain is Protein translocase subunit SecA, found in Bacillus cereus (strain B4264).